Reading from the N-terminus, the 445-residue chain is D-serine transporter DsdX (445 aa).

Residues 1-4 are Cytoplasmic-facing; the sequence is MHSQ. Residues 5-25 form a helical membrane-spanning segment; sequence IWVVSTLLISIVLIVLTIVKF. The Periplasmic portion of the chain corresponds to 26 to 28; it reads KFH. A helical transmembrane segment spans residues 29-49; sequence PFLALLLASFFVGTMMGMGPL. The Cytoplasmic portion of the chain corresponds to 50-56; the sequence is DMVNAIE. A helical membrane pass occupies residues 57–77; sequence SGIGGTLGFLAAVIGLGTILG. The Periplasmic segment spans residues 78–105; the sequence is KMMEVSGAAERIGLTLQRCRWLSVDVIM. A helical membrane pass occupies residues 106-126; it reads VLVGLICGITLFVEVGVVLLI. Residues 127 to 139 lie on the Cytoplasmic side of the membrane; it reads PLAFSIAKKTNTS. A helical membrane pass occupies residues 140-160; it reads LLKLAIPLCTALMAVHCVVPP. Over 161-177 the chain is Periplasmic; the sequence is HPAALYVANKLGADIGS. A helical transmembrane segment spans residues 178–198; that stretch reads VIVYGLLVGLMASLIGGPLFL. The Cytoplasmic segment spans residues 199–223; sequence KFLGQRLPFKPVPTEFADLKVRDEK. A helical membrane pass occupies residues 224-244; the sequence is TLPSLGATLFTILLPIALMLV. Over 245–257 the chain is Periplasmic; sequence KTIAELNMARESG. The helical transmembrane segment at 258 to 278 threads the bilayer; it reads LYILVEFIGNPITAMFIAVFV. Residues 279–301 lie on the Cytoplasmic side of the membrane; the sequence is AYYVLGIRQHMSMGTMLTHTENG. The helical transmembrane segment at 302-322 threads the bilayer; it reads FGSIANILLIIGAGGAFNAIL. Over 323-342 the chain is Periplasmic; it reads KSSSLADTLAVILSNMHMHP. 3 consecutive transmembrane segments (helical) span residues 343-363, 364-384, and 385-405; these read ILLAWLVALILHAAVGSATVA, MMGATAIVAPMLPLYPDISPE, and IIAIAIGSGAIGCTIVTDSLF. Residues 406–424 lie on the Cytoplasmic side of the membrane; that stretch reads WLVKQYCGATLNETFKYYT. The helical transmembrane segment at 425–445 threads the bilayer; that stretch reads TATFIASVVALAGTFLLSFII.

It belongs to the GntP permease family.

It localises to the cell inner membrane. Its function is as follows. A D-serine-specific transporter, may function as a H(+) symporter. This chain is D-serine transporter DsdX, found in Escherichia coli (strain K12).